Consider the following 258-residue polypeptide: Probable parvulin-type peptidyl-prolyl cis-trans isomerase (258 aa).

An N-terminal signal peptide occupies residues 1–19 (MKRIAMLAAACVIAVPAFA). Residues 127–219 (KMEYKVRHIL…FGWHVIQVDD (93 aa)) enclose the PpiC domain.

The protein belongs to the PpiC/parvulin rotamase family.

The catalysed reaction is [protein]-peptidylproline (omega=180) = [protein]-peptidylproline (omega=0). The protein is Probable parvulin-type peptidyl-prolyl cis-trans isomerase of Bordetella parapertussis (strain 12822 / ATCC BAA-587 / NCTC 13253).